A 128-amino-acid chain; its full sequence is Putative lipid-binding protein At4g00165 (128 aa).

A signal peptide spans 1-23 (MGISKALRSLLILLLLNITFFFG). 4 disulfides stabilise this stretch: C34-C90, C46-C76, C56-C75, and C92-C128.

This sequence belongs to the plant LTP family. PEARLI1 subfamily.

The protein localises to the secreted. This is Putative lipid-binding protein At4g00165 from Arabidopsis thaliana (Mouse-ear cress).